Here is a 44-residue protein sequence, read N- to C-terminus: uncharacterized protein (44 aa).

This is an uncharacterized protein from Escherichia coli (strain K12).